The following is a 216-amino-acid chain: Heart- and neural crest derivatives-expressed protein 2 (216 aa).

Residues 74 to 115 are disordered; that stretch reads MDHSHYGGVPPGSGPPGLGGPRPVKRRGTANRKERRRTQSIN. Over residues 82–93 the composition is skewed to gly residues; the sequence is VPPGSGPPGLGG. Basic residues predominate over residues 96-111; it reads PVKRRGTANRKERRRT. Residues 98 to 150 form the bHLH domain; the sequence is KRRGTANRKERRRTQSINSAFAELRECIPNVPADTKLSKIKTLRLATSYIAYL.

As to quaternary structure, efficient DNA binding requires dimerization with another bHLH protein.

Its subcellular location is the nucleus. In terms of biological role, essential for cardiac morphogenesis. Binds DNA on E-box consensus sequence 5'-CANNTG-3'. Plays an important role in limb development, particularly in the establishment of anterior-posterior polarization of the limb bud. This Gallus gallus (Chicken) protein is Heart- and neural crest derivatives-expressed protein 2 (HAND2).